Here is a 383-residue protein sequence, read N- to C-terminus: Agmatine deiminase (383 aa).

Agmatine-binding residues include Asp-220 and Asp-226. Cys-366 (amidino-cysteine intermediate) is an active-site residue.

This sequence belongs to the agmatine deiminase family. As to quaternary structure, forms homodimers.

The enzyme catalyses agmatine + H2O = N-carbamoylputrescine + NH4(+). Its pathway is amine and polyamine biosynthesis; putrescine biosynthesis via agmatine pathway; N-carbamoylputrescine from agmatine: step 1/1. Its activity is regulated as follows. Inhibited by N-ethylmaleimide and iodoacetamide. Its function is as follows. Mediates the hydrolysis of agmatine into N-carbamoylputrescine in the arginine decarboxylase (ADC) pathway of putrescine biosynthesis, a basic polyamine. This Arabidopsis thaliana (Mouse-ear cress) protein is Agmatine deiminase (AIH).